Reading from the N-terminus, the 501-residue chain is Glycoprotein 3-alpha-L-fucosyltransferase A (501 aa).

The Cytoplasmic portion of the chain corresponds to 1 to 39 (MGVFSNLRGPKIGLTHEELPVVANGSTSSSSSPSSFKRK). A helical; Signal-anchor for type II membrane protein membrane pass occupies residues 40-60 (VSTFLPICVALVVIIEIGFLC). Over 61–501 (RLDNASLVDT…PCPKFEVVFV (441 aa)) the chain is Lumenal. 4 N-linked (GlcNAc...) asparagine glycosylation sites follow: Asn-64, Asn-337, Asn-420, and Asn-481.

This sequence belongs to the glycosyltransferase 10 family. It depends on Mg(2+) as a cofactor. Mn(2+) serves as cofactor. Post-translationally, glycosylation may be important for enzymatic activity.

The protein localises to the golgi apparatus. The protein resides in the golgi stack membrane. The enzyme catalyses N(4)-{beta-D-GlcNAc-(1-&gt;2)-alpha-D-Man-(1-&gt;3)-[beta-D-GlcNAc-(1-&gt;2)-alpha-D-Man-(1-&gt;6)]-beta-D-Man-(1-&gt;4)-beta-D-GlcNAc-(1-&gt;4)-beta-D-GlcNAc}-L-asparaginyl-[protein] + GDP-beta-L-fucose = N(4)-{beta-D-GlcNAc-(1-&gt;2)-alpha-D-Man-(1-&gt;3)-[beta-D-GlcNAc-(1-&gt;2)-alpha-D-Man-(1-&gt;6)]-beta-D-Man-(1-&gt;4)-beta-D-GlcNAc-(1-&gt;4)-[alpha-L-Fuc(1-&gt;3)]-beta-D-GlcNAc}-L-asparaginyl-[protein] + GDP + H(+). It functions in the pathway protein modification; protein glycosylation. Its activity is regulated as follows. Inhibited by Cu(2+) and Zn(2+). Involved in cell wall synthesis. Preferentially catalyzes the addition of fucose in alpha 1-3 linkage to the first GlcNAc residue next to the peptide chains in N-glycans. This Arabidopsis thaliana (Mouse-ear cress) protein is Glycoprotein 3-alpha-L-fucosyltransferase A (FUT11).